Here is a 445-residue protein sequence, read N- to C-terminus: UDP-N-acetylmuramoylalanine--D-glutamate ligase (445 aa).

Residue 117-123 (GSNGKTT) participates in ATP binding.

It belongs to the MurCDEF family.

It is found in the cytoplasm. It carries out the reaction UDP-N-acetyl-alpha-D-muramoyl-L-alanine + D-glutamate + ATP = UDP-N-acetyl-alpha-D-muramoyl-L-alanyl-D-glutamate + ADP + phosphate + H(+). It participates in cell wall biogenesis; peptidoglycan biosynthesis. Its function is as follows. Cell wall formation. Catalyzes the addition of glutamate to the nucleotide precursor UDP-N-acetylmuramoyl-L-alanine (UMA). In Neisseria meningitidis serogroup C (strain 053442), this protein is UDP-N-acetylmuramoylalanine--D-glutamate ligase.